A 427-amino-acid chain; its full sequence is Glutamate-1-semialdehyde 2,1-aminomutase (427 aa).

The residue at position 265 (K265) is an N6-(pyridoxal phosphate)lysine.

Belongs to the class-III pyridoxal-phosphate-dependent aminotransferase family. HemL subfamily. In terms of assembly, homodimer. It depends on pyridoxal 5'-phosphate as a cofactor.

Its subcellular location is the cytoplasm. The catalysed reaction is (S)-4-amino-5-oxopentanoate = 5-aminolevulinate. The protein operates within porphyrin-containing compound metabolism; protoporphyrin-IX biosynthesis; 5-aminolevulinate from L-glutamyl-tRNA(Glu): step 2/2. This chain is Glutamate-1-semialdehyde 2,1-aminomutase, found in Marinomonas sp. (strain MWYL1).